Consider the following 174-residue polypeptide: Methylated-DNA--protein-cysteine methyltransferase (174 aa).

Residue Cys144 is the Nucleophile; methyl group acceptor of the active site.

It belongs to the MGMT family.

The protein localises to the cytoplasm. It catalyses the reaction a 6-O-methyl-2'-deoxyguanosine in DNA + L-cysteinyl-[protein] = S-methyl-L-cysteinyl-[protein] + a 2'-deoxyguanosine in DNA. It carries out the reaction a 4-O-methyl-thymidine in DNA + L-cysteinyl-[protein] = a thymidine in DNA + S-methyl-L-cysteinyl-[protein]. In terms of biological role, involved in the cellular defense against the biological effects of O6-methylguanine (O6-MeG) and O4-methylthymine (O4-MeT) in DNA. Repairs the methylated nucleobase in DNA by stoichiometrically transferring the methyl group to a cysteine residue in the enzyme. This is a suicide reaction: the enzyme is irreversibly inactivated. This Pyrococcus furiosus (strain ATCC 43587 / DSM 3638 / JCM 8422 / Vc1) protein is Methylated-DNA--protein-cysteine methyltransferase.